Reading from the N-terminus, the 473-residue chain is Fumarate hydratase class II (473 aa).

Substrate is bound by residues 105–107, 130–133, 140–142, and threonine 188; these read SGT, HPND, and SSN. Histidine 189 (proton donor/acceptor) is an active-site residue. The active site involves serine 319. Residues serine 320 and 325-327 each bind substrate; that span reads KVN.

Belongs to the class-II fumarase/aspartase family. Fumarase subfamily. Homotetramer.

The protein resides in the cytoplasm. The catalysed reaction is (S)-malate = fumarate + H2O. It functions in the pathway carbohydrate metabolism; tricarboxylic acid cycle; (S)-malate from fumarate: step 1/1. Its function is as follows. Involved in the TCA cycle. Catalyzes the stereospecific interconversion of fumarate to L-malate. The protein is Fumarate hydratase class II of Xylella fastidiosa (strain Temecula1 / ATCC 700964).